Consider the following 203-residue polypeptide: Putative 3-methyladenine DNA glycosylase (203 aa).

It belongs to the DNA glycosylase MPG family.

The protein is Putative 3-methyladenine DNA glycosylase of Mycobacterium tuberculosis (strain ATCC 25177 / H37Ra).